The following is a 324-amino-acid chain: Beta-ketoacyl-[acyl-carrier-protein] synthase III (324 aa).

Catalysis depends on residues cysteine 112 and histidine 250. The tract at residues 251-255 (QANIR) is ACP-binding. Residue asparagine 280 is part of the active site.

Belongs to the thiolase-like superfamily. FabH family. As to quaternary structure, homodimer.

It is found in the cytoplasm. The catalysed reaction is malonyl-[ACP] + acetyl-CoA + H(+) = 3-oxobutanoyl-[ACP] + CO2 + CoA. The protein operates within lipid metabolism; fatty acid biosynthesis. In terms of biological role, catalyzes the condensation reaction of fatty acid synthesis by the addition to an acyl acceptor of two carbons from malonyl-ACP. Catalyzes the first condensation reaction which initiates fatty acid synthesis and may therefore play a role in governing the total rate of fatty acid production. Possesses both acetoacetyl-ACP synthase and acetyl transacylase activities. Its substrate specificity determines the biosynthesis of branched-chain and/or straight-chain of fatty acids. This Clostridium novyi (strain NT) protein is Beta-ketoacyl-[acyl-carrier-protein] synthase III.